A 297-amino-acid chain; its full sequence is Acetylglutamate kinase (297 aa).

Residues 64–65 (GG), R86, and N190 each bind substrate.

The protein belongs to the acetylglutamate kinase family. ArgB subfamily.

The protein localises to the cytoplasm. It catalyses the reaction N-acetyl-L-glutamate + ATP = N-acetyl-L-glutamyl 5-phosphate + ADP. It functions in the pathway amino-acid biosynthesis; L-arginine biosynthesis; N(2)-acetyl-L-ornithine from L-glutamate: step 2/4. Catalyzes the ATP-dependent phosphorylation of N-acetyl-L-glutamate. The protein is Acetylglutamate kinase of Solidesulfovibrio magneticus (strain ATCC 700980 / DSM 13731 / RS-1) (Desulfovibrio magneticus).